A 399-amino-acid polypeptide reads, in one-letter code: Elongation factor Tu (399 aa).

Positions 10 to 209 constitute a tr-type G domain; the sequence is KPHVNIGTIG…DVDEYIPTPV (200 aa). Residues 19–26 are G1; that stretch reads GHVDHGKT. Residue 19 to 26 participates in GTP binding; it reads GHVDHGKT. Threonine 26 is a Mg(2+) binding site. Residues 62–66 are G2; it reads GITIN. The tract at residues 83-86 is G3; that stretch reads DCPG. Residues 83–87 and 138–141 each bind GTP; these read DCPGH and NKCD. The interval 138 to 141 is G4; the sequence is NKCD. The interval 175-177 is G5; that stretch reads SAY.

The protein belongs to the TRAFAC class translation factor GTPase superfamily. Classic translation factor GTPase family. EF-Tu/EF-1A subfamily. In terms of assembly, monomer.

The protein resides in the cytoplasm. The catalysed reaction is GTP + H2O = GDP + phosphate + H(+). Functionally, GTP hydrolase that promotes the GTP-dependent binding of aminoacyl-tRNA to the A-site of ribosomes during protein biosynthesis. In Bifidobacterium animalis subsp. lactis (strain AD011), this protein is Elongation factor Tu.